Here is a 156-residue protein sequence, read N- to C-terminus: ATP synthase subunit b (156 aa).

A helical membrane pass occupies residues I7–P27.

This sequence belongs to the ATPase B chain family. In terms of assembly, F-type ATPases have 2 components, F(1) - the catalytic core - and F(0) - the membrane proton channel. F(1) has five subunits: alpha(3), beta(3), gamma(1), delta(1), epsilon(1). F(0) has three main subunits: a(1), b(2) and c(10-14). The alpha and beta chains form an alternating ring which encloses part of the gamma chain. F(1) is attached to F(0) by a central stalk formed by the gamma and epsilon chains, while a peripheral stalk is formed by the delta and b chains.

The protein localises to the cell inner membrane. In terms of biological role, f(1)F(0) ATP synthase produces ATP from ADP in the presence of a proton or sodium gradient. F-type ATPases consist of two structural domains, F(1) containing the extramembraneous catalytic core and F(0) containing the membrane proton channel, linked together by a central stalk and a peripheral stalk. During catalysis, ATP synthesis in the catalytic domain of F(1) is coupled via a rotary mechanism of the central stalk subunits to proton translocation. Its function is as follows. Component of the F(0) channel, it forms part of the peripheral stalk, linking F(1) to F(0). This chain is ATP synthase subunit b, found in Bordetella bronchiseptica (strain ATCC BAA-588 / NCTC 13252 / RB50) (Alcaligenes bronchisepticus).